The primary structure comprises 347 residues: DnaJ homolog subfamily C member 22 (347 aa).

Positions 4-50 (GLLMTYTLWAVGGPAGLHHLYLGRDSHALLWMLTLGGGGLGWLWEFW) constitute a TM2 domain. A run of 7 helical transmembrane segments spans residues 5–25 (LLMT…HLYL), 32–52 (LLWM…FWML), 81–101 (FVAQ…SLSF), 105–125 (FYIV…AAVG), 135–155 (LGAA…ILPI), 186–206 (GLAY…HTAV), and 218–238 (FLSW…VLLL). Residues 277-347 (LALQVFGLSE…GSWRWEETSF (71 aa)) enclose the J domain.

The protein resides in the membrane. In terms of biological role, may function as a co-chaperone. The polypeptide is DnaJ homolog subfamily C member 22 (DNAJC22) (Bos taurus (Bovine)).